Reading from the N-terminus, the 71-residue chain is uncharacterized protein (71 aa).

This is an uncharacterized protein from Homo sapiens (Human).